A 357-amino-acid chain; its full sequence is Cyclic AMP-responsive element-binding protein 5 (357 aa).

Residues 114-239 are disordered; the sequence is RQDQTPHHHL…FLERNRAAAT (126 aa). 2 stretches are compositionally biased toward basic residues: residues 120–129 and 138–175; these read HHHLHSHPHQ and PYPHQHQHPAHHPHPQPHHQQNHPHHHSHSHLHAHPAH. The segment covering 186 to 195 has biased composition (polar residues); sequence TGNQAQVSPA. Residues 196–206 are compositionally biased toward low complexity; that stretch reads TQQMQPTQTIQ. Residues 218-235 show a composition bias toward basic and acidic residues; sequence VVDEDPDERRRKFLERNR. Positions 224–287 constitute a bZIP domain; that stretch reads DERRRKFLER…AQLKQLLLTH (64 aa). The tract at residues 226-246 is basic motif; sequence RRRKFLERNRAAATRCRQKRK. Positions 252-280 are leucine-zipper; that stretch reads LEKKAEELTQTNMQLQNEVSMLKNEVAQL. The disordered stretch occupies residues 298–318; that stretch reads ESQGYLSPESSPPASPVPACS.

This sequence belongs to the bZIP family. In terms of assembly, binds DNA as a homodimer or as a heterodimer with JUN or ATF2/CREBP1.

The protein localises to the nucleus. Its function is as follows. Binds to the cAMP response element and activates transcription. This is Cyclic AMP-responsive element-binding protein 5 (Creb5) from Mus musculus (Mouse).